The sequence spans 484 residues: Keratin, type I cytoskeletal 14 (484 aa).

A disordered region spans residues 1–20; that stretch reads MATCSRQFTSSSSMKGSCGI. A head region spans residues 1–120; it reads MATCSRQFTS…GIGDGLLVGS (120 aa). The tract at residues 121-156 is coil 1A; it reads EKVTMQNLNDRLATYLDKVRALEEANTELEVKIRDW. The region spanning 121 to 432 is the IF rod domain; sequence EKVTMQNLND…RLLEGEDAHL (312 aa). The tract at residues 157-174 is linker 1; sequence YQRQRPTEIKDYSPYFKT. The segment at 175–266 is coil 1B; it reads IEDLKSKILA…KNHEEEMASM (92 aa). Positions 267–289 are linker 12; the sequence is RGQVGGDVNVEMDAAPGVDLSRI. The segment at 290–428 is coil 2; that stretch reads LNEMRDQYEK…ATYRRLLEGE (139 aa). Residues 429 to 484 are tail; sequence DAHLSSSQFSSSSQFSSGSQSSRDVTSTNRQIRTKVMDVHDGKVVSTHEQVLRTKN. Residues 431-484 form an interaction with Type I keratins and keratin filaments region; sequence HLSSSQFSSSSQFSSGSQSSRDVTSTNRQIRTKVMDVHDGKVVSTHEQVLRTKN. Residues 435–450 show a composition bias toward low complexity; that stretch reads SQFSSSSQFSSGSQSS. The tract at residues 435–457 is disordered; that stretch reads SQFSSSSQFSSGSQSSRDVTSTN. At Ser-447 the chain carries Phosphoserine.

The protein belongs to the intermediate filament family. Heterotetramer of two type I and two type II keratins. Forms a disulfide-linked heterodimer (via 2B domains) with KRT5 (via 2B domains). Forms a heterodimer with KRT1; the interaction is more abundant in the absence of KRT5. Interacts with PLEC isoform 1C, when in a heterodimer with KRT5. Interacts with TRADD and with keratin filaments. Associates with other type I keratins. Interacts with EPPK1. Interacts with KLHL24. Interacts with PKP1 (via N-terminus) and PKP2. In terms of processing, a disulfide bond is formed between rather than within filaments and promotes the formation of a keratin filament cage around the nucleus. Post-translationally, ubiquitinated by the BCR(KLHL24) E3 ubiquitin ligase complex. In terms of tissue distribution, expressed in the corneal epithelium (at protein level). Expressed in the basal layer of the epidermis and the outer root sheath of hair follicles (at protein level). Expressed in the epithelial basal layer in the tail epidermis. Expressed in the parabasal cell row, basal cell layer, and suprabasal epithelial layer of the tongue.

The protein localises to the cytoplasm. It localises to the nucleus. Its function is as follows. The nonhelical tail domain is involved in promoting KRT5-KRT14 filaments to self-organize into large bundles and enhances the mechanical properties involved in resilience of keratin intermediate filaments in vitro. The polypeptide is Keratin, type I cytoskeletal 14 (Krt14) (Mus musculus (Mouse)).